A 103-amino-acid polypeptide reads, in one-letter code: Putative membrane protein insertion efficiency factor (103 aa).

It belongs to the UPF0161 family.

The protein resides in the cell membrane. Functionally, could be involved in insertion of integral membrane proteins into the membrane. In Clavibacter michiganensis subsp. michiganensis (strain NCPPB 382), this protein is Putative membrane protein insertion efficiency factor.